Here is a 327-residue protein sequence, read N- to C-terminus: Serine/threonine-protein phosphatase alpha-1 isoform (327 aa).

4 residues coordinate Mn(2+): Asp-62, His-64, Asp-90, and Asn-122. His-123 (proton donor) is an active-site residue. His-171 and His-246 together coordinate Mn(2+). Residues 308 to 327 are disordered; it reads GSSGRPLTPPRGANNKNKKK. The residue at position 315 (Thr-315) is a Phosphothreonine.

It belongs to the PPP phosphatase family. PP-1 subfamily. Interacts with Nop17l. It depends on Mn(2+) as a cofactor.

It catalyses the reaction O-phospho-L-seryl-[protein] + H2O = L-seryl-[protein] + phosphate. The enzyme catalyses O-phospho-L-threonyl-[protein] + H2O = L-threonyl-[protein] + phosphate. The sequence is that of Serine/threonine-protein phosphatase alpha-1 isoform (Pp1alpha-96A) from Drosophila melanogaster (Fruit fly).